Here is a 92-residue protein sequence, read N- to C-terminus: Large ribosomal subunit protein bL34m (92 aa).

The transit peptide at 1 to 46 (MALLAGSLLGPTSRSAALLGGRWLQPRAWLGFPDAWGLPTPQQARG) directs the protein to the mitochondrion. Positions 40-57 (TPQQARGKSRGNEYQPSN) are enriched in polar residues. Residues 40-63 (TPQQARGKSRGNEYQPSNIKRKNK) form a disordered region. Ser71 is modified (phosphoserine).

Belongs to the bacterial ribosomal protein bL34 family. As to quaternary structure, component of the mitochondrial ribosome large subunit (39S) which comprises a 16S rRNA and about 50 distinct proteins.

It localises to the mitochondrion. The polypeptide is Large ribosomal subunit protein bL34m (MRPL34) (Macaca fascicularis (Crab-eating macaque)).